A 138-amino-acid polypeptide reads, in one-letter code: Basic phospholipase A2 PL-Y (138 aa).

The N-terminal stretch at 1–16 (MRTLWIMAVLLVGVEG) is a signal peptide. 7 disulfides stabilise this stretch: C42/C131, C44/C60, C59/C111, C65/C138, C66/C104, C73/C97, and C91/C102. Positions 43, 45, and 47 each coordinate Ca(2+). The active site involves H63. D64 contacts Ca(2+). D105 is a catalytic residue.

The protein belongs to the phospholipase A2 family. Group II subfamily. D49 sub-subfamily. The cofactor is Ca(2+). As to expression, expressed by the venom gland.

The protein localises to the secreted. The enzyme catalyses a 1,2-diacyl-sn-glycero-3-phosphocholine + H2O = a 1-acyl-sn-glycero-3-phosphocholine + a fatty acid + H(+). In terms of biological role, snake venom phospholipase A2 (PLA2) that can cleave arachidonate at the sn-2 position from phospholipides in the micellar state or in bilayer membranes. PLA2 catalyzes the calcium-dependent hydrolysis of the 2-acyl groups in 3-sn-phosphoglycerides. In Protobothrops flavoviridis (Habu), this protein is Basic phospholipase A2 PL-Y.